Consider the following 1452-residue polypeptide: Arf-GAP with Rho-GAP domain, ANK repeat and PH domain-containing protein 1 (1452 aa).

In terms of domain architecture, SAM spans 6 to 70 (DAALSVAEWL…LAGLHRAHAP (65 aa)). Residues 81-90 (PVPMKRHIFR) are required for interaction with SH3KBP1. Disordered stretches follow at residues 87–258 (HIFR…LPSR) and 271–304 (EGEE…LNPP). 3 stretches are compositionally biased toward pro residues: residues 92-104 (PPVP…PPPT), 154-167 (SVPP…PPYP), and 205-225 (PLQP…PPRL). Composition is skewed to acidic residues over residues 228–239 (EFDDSDYDDVPE) and 271–286 (EGEE…DDDH). Ser-232 carries the post-translational modification Phosphoserine. Tyr-234 is subject to Phosphotyrosine; by PTK6. The 93-residue stretch at 329-421 (PVIKAGWLDK…WMQALQQAVV (93 aa)) folds into the PH 1 domain. Phosphoserine is present on Ser-430. The PH 2 domain occupies 442–531 (QPDRAGSLEL…WLEAMQGAIA (90 aa)). At Tyr-506 the chain carries Phosphotyrosine. Residues 537 to 662 (SEVAERIWAA…RYHPLFGNQE (126 aa)) form the Arf-GAP domain. The C4-type zinc finger occupies 552 to 575 (CADCGAAQPDWASINLCVVICKRC). Phosphoserine is present on Ser-740. The 108-residue stretch at 745 to 852 (TVSHSGFLYK…WVKCIAKAFV (108 aa)) folds into the PH 3 domain. The region spanning 956–1141 (ASLGDTLSEQ…DLINHYVVVF (186 aa)) is the Rho-GAP domain. In terms of domain architecture, Ras-associating spans 1174–1263 (GDFICTVYLE…SHLVVKKYQS (90 aa)). A PH 4 domain is found at 1276–1398 (GDTKHGMMKF…WFATFLSVQH (123 aa)). Phosphoserine occurs at positions 1430 and 1437.

As to quaternary structure, interacts with SH3KBP1/CIN85 (via SH3 domains). The interaction is independent of EGF and does not affect ARAP1 GTPase-activating activity but is involved in regulating ubiquitination and endocytic trafficking of EGFR. ARAP1 competes with E3 ubiquitin-protein ligase CBL for binding to SH3KBP1, preventing interaction of CBL with SH3KBP1; this is likely to regulate SH3KBP1-mediated internalization of EGFR. Interacts with TNFRSF10A. In terms of processing, phosphorylated by PTK6 following EGF stimulation which enhances EGFR signaling by delaying EGFR down-regulation; the interaction is mediated by the SH2 domain of PTK6. Phosphorylation promotes association with the Golgi apparatus and endosomes. Expressed in the retina where it is detected in Mueller glia (at protein level). Also detected in the retinal pigment epithelium (at protein level). Expressed in osteoclasts (at protein level).

The protein localises to the cytoplasm. The protein resides in the golgi apparatus. It is found in the trans-Golgi network. It localises to the golgi stack membrane. Its subcellular location is the cell membrane. The protein localises to the endosome. The protein resides in the multivesicular body. It is found in the cell projection. It localises to the ruffle. Its subcellular location is the podosome. The protein localises to the early endosome. Its function is as follows. Phosphatidylinositol 3,4,5-trisphosphate-dependent GTPase-activating protein that modulates actin cytoskeleton remodeling by regulating ARF and RHO family members. Activated by phosphatidylinositol 3,4,5-trisphosphate (PtdIns(3,4,5)P3) binding and, to a lesser extent, by phosphatidylinositol 3,4-bisphosphate (PtdIns(3,4)P2) binding. Has a preference for ARF1 and ARF5. Positively regulates the ring size of circular dorsal ruffles and promotes macropinocytosis. Acts as a bridging factor in osteoclasts to control actin and membrane dynamics. Regulates the condensing of osteoclast podosomes into sealing zones which segregate the bone-facing membrane from other membrane domains and are required for osteoclast resorption activity. Also regulates recruitment of the AP-3 complex to endosomal membranes and trafficking of lysosomal membrane proteins to the ruffled membrane border of osteoclasts to modulate bone resorption. Regulates the endocytic trafficking of EGFR. Regulates the incorporation of CD63 and CD9 into multivesicular bodies. Required in the retinal pigment epithelium (RPE) for photoreceptor survival due to its role in promoting RPE phagocytosis. This Mus musculus (Mouse) protein is Arf-GAP with Rho-GAP domain, ANK repeat and PH domain-containing protein 1.